An 86-amino-acid polypeptide reads, in one-letter code: Large ribosomal subunit protein bL27 (86 aa).

A disordered region spans residues 1 to 26 (MATKKAGGSSRNGRDSAGRRLGVKKS).

The protein belongs to the bacterial ribosomal protein bL27 family.

The protein is Large ribosomal subunit protein bL27 of Rickettsia akari (strain Hartford).